Reading from the N-terminus, the 313-residue chain is Glyoxylate/hydroxypyruvate reductase A HPR2 (313 aa).

Residues 152 to 155 (LGRI), 174 to 176 (SRT), 230 to 232 (IGR), and Asp256 each bind NADP(+). The active site involves Arg232. The active site involves Glu261. The Proton donor role is filled by His279. An NADP(+)-binding site is contributed by 279–281 (HVG).

This sequence belongs to the D-isomer specific 2-hydroxyacid dehydrogenase family. GyaR subfamily. In terms of assembly, homodimer.

The protein localises to the cytoplasm. The catalysed reaction is glycolate + NADP(+) = glyoxylate + NADPH + H(+). It catalyses the reaction (R)-glycerate + NAD(+) = 3-hydroxypyruvate + NADH + H(+). The enzyme catalyses (R)-glycerate + NADP(+) = 3-hydroxypyruvate + NADPH + H(+). With respect to regulation, strongly inhibited by oxalate. Catalyzes the NADPH-dependent reduction of glyoxylate and hydroxypyruvate (HP) into glycolate and glycerate in the cytoplasm, thus providing a cytosolic bypass to the photorespiratory core cycle. Mostly active in the presence of NADPH and hydroxypyruvate. The chain is Glyoxylate/hydroxypyruvate reductase A HPR2 (HPR2) from Arabidopsis thaliana (Mouse-ear cress).